Here is a 563-residue protein sequence, read N- to C-terminus: NAD(P)H-quinone oxidoreductase chain 4 (563 aa).

15 consecutive transmembrane segments (helical) span residues 25 to 45, 56 to 76, 90 to 110, 111 to 131, 133 to 153, 157 to 177, 189 to 209, 230 to 250, 264 to 284, 298 to 318, 335 to 355, 356 to 376, 397 to 417, 438 to 458, and 485 to 505; these read FPWL…VPFI, WFAL…YLYG, VSWL…ISMP, LILL…PVTF, PKLF…VFAV, LLFF…LAIW, FIIY…AMGF, GFQL…LPIV, TAPV…YALM, FAPL…LTSF, MGFV…GAML, QMIS…ATYD, FALW…SGFV, IVIA…LLSM, and VYII…PRLM.

It belongs to the complex I subunit 4 family.

It localises to the cellular thylakoid membrane. It catalyses the reaction a plastoquinone + NADH + (n+1) H(+)(in) = a plastoquinol + NAD(+) + n H(+)(out). The enzyme catalyses a plastoquinone + NADPH + (n+1) H(+)(in) = a plastoquinol + NADP(+) + n H(+)(out). Its function is as follows. NDH-1 shuttles electrons from NAD(P)H, via FMN and iron-sulfur (Fe-S) centers, to quinones in the respiratory chain. The immediate electron acceptor for the enzyme in this species is believed to be plastoquinone. Couples the redox reaction to proton translocation (for every two electrons transferred, four hydrogen ions are translocated across the cytoplasmic membrane), and thus conserves the redox energy in a proton gradient. The sequence is that of NAD(P)H-quinone oxidoreductase chain 4 from Prochlorococcus marinus (strain MIT 9303).